The chain runs to 942 residues: UvrABC system protein A (942 aa).

G32–S39 contributes to the ATP binding site. The segment at C251–C278 adopts a C4-type zinc-finger fold. ABC transporter domains lie at W308–I589 and G609–K937. G641–S648 lines the ATP pocket. A C4-type zinc finger spans residues C740–C766.

It belongs to the ABC transporter superfamily. UvrA family. As to quaternary structure, forms a heterotetramer with UvrB during the search for lesions.

It localises to the cytoplasm. Its function is as follows. The UvrABC repair system catalyzes the recognition and processing of DNA lesions. UvrA is an ATPase and a DNA-binding protein. A damage recognition complex composed of 2 UvrA and 2 UvrB subunits scans DNA for abnormalities. When the presence of a lesion has been verified by UvrB, the UvrA molecules dissociate. This is UvrABC system protein A from Streptococcus pyogenes serotype M6 (strain ATCC BAA-946 / MGAS10394).